Consider the following 733-residue polypeptide: Probable Rho-GTPase-activating protein 6 (733 aa).

Over residues 116–125 (VFNESKSSSP) the composition is skewed to polar residues. Residues 116–135 (VFNESKSSSPPDAHTDKYFT) form a disordered region. Threonine 141 bears the Phosphothreonine mark. Positions 174–256 (RFDKPSNNGP…SKGSWSSILR (83 aa)) are disordered. Residues 179–195 (SNNGPLGRSSLNLSSLS) are compositionally biased toward low complexity. Polar residues-rich tracts occupy residues 196–218 (HELQ…SSDT) and 225–240 (PPSS…ASQD). Residues 312–546 (TNLCKFTFPT…GLIIHWPEVL (235 aa)) enclose the Rho-GAP domain. The tract at residues 692-713 (PVTVTASSETNKKSQKINKKAS) is disordered. Positions 704–713 (KSQKINKKAS) are enriched in basic residues.

This chain is Probable Rho-GTPase-activating protein 6 (rga6), found in Schizosaccharomyces pombe (strain 972 / ATCC 24843) (Fission yeast).